A 311-amino-acid polypeptide reads, in one-letter code: Probable manganese-dependent inorganic pyrophosphatase (311 aa).

Residues H9, D13, D15, D75, H97, and D149 each contribute to the Mn(2+) site.

This sequence belongs to the PPase class C family. Mn(2+) serves as cofactor.

The protein localises to the cytoplasm. It catalyses the reaction diphosphate + H2O = 2 phosphate + H(+). The sequence is that of Probable manganese-dependent inorganic pyrophosphatase from Lactobacillus helveticus (strain DPC 4571).